Consider the following 237-residue polypeptide: Ubiquinone biosynthesis O-methyltransferase (237 aa).

The S-adenosyl-L-methionine site is built by Arg-38, Gly-58, Asp-79, and Met-124.

The protein belongs to the methyltransferase superfamily. UbiG/COQ3 family.

It catalyses the reaction a 3-demethylubiquinol + S-adenosyl-L-methionine = a ubiquinol + S-adenosyl-L-homocysteine + H(+). The catalysed reaction is a 3-(all-trans-polyprenyl)benzene-1,2-diol + S-adenosyl-L-methionine = a 2-methoxy-6-(all-trans-polyprenyl)phenol + S-adenosyl-L-homocysteine + H(+). Its pathway is cofactor biosynthesis; ubiquinone biosynthesis. Its function is as follows. O-methyltransferase that catalyzes the 2 O-methylation steps in the ubiquinone biosynthetic pathway. This is Ubiquinone biosynthesis O-methyltransferase from Acinetobacter baumannii (strain SDF).